The following is a 108-amino-acid chain: Ig light chain C region (108 aa).

In terms of domain architecture, Ig-like spans 7-102; that stretch reads PTVSIYCPSL…LTPALAKSFQ (96 aa). 2 disulfides stabilise this stretch: Cys13–Cys106 and Cys28–Cys86.

This Aquarana catesbeiana (American bullfrog) protein is Ig light chain C region.